The sequence spans 146 residues: MNKIIIYTDGGCRGNPGIGGWGVWLKYGDYDKKLQGVQQDTTNNQMELTATIKALEVIKSNDIAIDLFTDSKYVITGISEWIKNWKAKGWKTANKKPVKNIDLWQRLDVLNNQHNVTWHWVKGHSGDKGNDMADALANLAMDKIST.

An RNase H type-1 domain is found at 1-142 (MNKIIIYTDG…ADALANLAMD (142 aa)). Mg(2+) contacts are provided by D9, E47, D70, and D134.

The protein belongs to the RNase H family. In terms of assembly, monomer. Requires Mg(2+) as cofactor.

The protein resides in the cytoplasm. The enzyme catalyses Endonucleolytic cleavage to 5'-phosphomonoester.. In terms of biological role, endonuclease that specifically degrades the RNA of RNA-DNA hybrids. The protein is Ribonuclease H of Ruthia magnifica subsp. Calyptogena magnifica.